Reading from the N-terminus, the 304-residue chain is Porphobilinogen deaminase (304 aa).

Cys-240 is subject to S-(dipyrrolylmethanemethyl)cysteine.

The protein belongs to the HMBS family. In terms of assembly, monomer. Requires dipyrromethane as cofactor.

It catalyses the reaction 4 porphobilinogen + H2O = hydroxymethylbilane + 4 NH4(+). Its pathway is porphyrin-containing compound metabolism; protoporphyrin-IX biosynthesis; coproporphyrinogen-III from 5-aminolevulinate: step 2/4. Functionally, tetrapolymerization of the monopyrrole PBG into the hydroxymethylbilane pre-uroporphyrinogen in several discrete steps. In Xanthomonas euvesicatoria pv. vesicatoria (strain 85-10) (Xanthomonas campestris pv. vesicatoria), this protein is Porphobilinogen deaminase.